A 913-amino-acid chain; its full sequence is MDKKSFETVLDEIRKAVLTEYKLKAIEYVHGYFSSEQVVDLLRYFSWAEPQLKAMKALQHKMVAVHPAEVVSILSCFTFSKDKLAALELLASNIVDAQNSRPIEDLFRINMSEKKRCKRVLEQASKAGCKAPHAMISSCGTFPGNPYPKGKPSRINGIFPGTPLKKDGEEITNEGKGIAARILGPSKPPPSTYNPHKPVPYPIPPCRPHATIAPSAYNNAGLVPLANVIAPGVPPPPPYTPNPAGTDNEDLSSQSKPTQSQTFSTPASQLFSPHGSSNPSTPAATPVPAVSPAKAVNHPSVSAAATGAGMSATNTALAVFPTPQPNTPNPTVIRTPSVPATPVTSTHSTTPTPVPSVFSGLVPLPGLSATPTLPTQASSISRVTLASSETFASTCAPFSGHSSASSTAGSASNPITAPLSSVFAGLPLPFPPASHSIATPTPSVIASAAGPHGVNSPLLSALKGFLTSNDTHLINSSALPSAVTSGLASLSSLPNRNSDSPASATNKCYPPAAVPAAQRSSTPGLAMFPGLQSPVASATSVAPTLPAQSPLATPSTAVPVSCGSSGSLLHGPHAGGISSAPAAATMPVMIKSEPTSPPPSAFKGPAHPGTPVRGTLGLSGALGRGYPTTSVPISVSTCLNPALSGLSSLSTPLAGSMSLPPHASSTPIAPVFTALPPFTSLTNSFPLPGSPSLNPAVSLAGSSTTTTSAAVHPSSATVRSVLPTSNASPAAFPLNLSTAVPSLFAVTQGPLPTSNPSYPGFPVSSAPSGAPTLPSFPGLQAPSTVAVTPLPVAASAPSPAPVLPGFASAFSSNFNSALVAQAGLSSGLQAAGSSVFPGLLSLPGIPGFSQAPPQSSLQELQHSAAAQSALLQQVHSASALESYPAQADGFPSYPSTPGTPFSLQTGLSQSGWQ.

N-acetylmethionine is present on Met-1. Disordered stretches follow at residues 233-291 (VPPP…PAVS), 488-507 (ASLS…ATNK), 592-618 (SEPT…TLGL), and 888-913 (DGFP…SGWQ). The span at 251–275 (LSSQSKPTQSQTFSTPASQLFSPHG) shows a compositional bias: polar residues. A compositionally biased stretch (low complexity) spans 276–291 (SSNPSTPAATPVPAVS). Over residues 488–506 (ASLSSLPNRNSDSPASATN) the composition is skewed to polar residues. Residues 893–913 (YPSTPGTPFSLQTGLSQSGWQ) are compositionally biased toward polar residues.

As to quaternary structure, interacts with TET2 and OGT; this interaction mediates TET2 O-GlcNAcylation and stability by promoting the interaction between OGT and TET2. Interacts with KDM6A. Interacts with TET1. In terms of processing, glycosylated. Interaction with OGT leads to GlcNAcylation.

In terms of biological role, mediates OGT interaction with and O-GlcNAcylation of TET2 to control TET2 stabilization at enhancers and CpG islands (CGIs). The sequence is that of Proline and serine-rich protein 1 from Mus musculus (Mouse).